The following is a 426-amino-acid chain: Squamosa promoter-binding-like protein 10 (426 aa).

An SBP-type zinc finger spans residues proline 178–proline 255. Zn(2+)-binding residues include cysteine 181, cysteine 186, cysteine 203, histidine 206, cysteine 222, cysteine 225, histidine 229, and cysteine 241. The Bipartite nuclear localization signal motif lies at lysine 238–lysine 254. Composition is skewed to low complexity over residues aspartate 268–serine 287 and serine 401–asparagine 417. 2 disordered regions span residues aspartate 268–glycine 290 and proline 392–methionine 426.

In terms of tissue distribution, expressed in stems, leaf sheaths, and young panicles.

It localises to the nucleus. Its function is as follows. Trans-acting factor that binds specifically to the consensus nucleotide sequence 5'-TNCGTACAA-3'. The sequence is that of Squamosa promoter-binding-like protein 10 (SPL10) from Oryza sativa subsp. indica (Rice).